Reading from the N-terminus, the 3003-residue chain is MAX gene-associated protein (3003 aa).

Residues Lys4 and Lys178 each participate in a glycyl lysine isopeptide (Lys-Gly) (interchain with G-Cter in SUMO2) cross-link. The segment at residues 84-260 (MWNEFHNRST…YNPFAKGFRD (177 aa)) is a DNA-binding region (T-box). Positions 259-277 (RDDGLSSKPQREGKQRNSS) are enriched in basic and acidic residues. The interval 259–290 (RDDGLSSKPQREGKQRNSSDQEGNSVSSSPAH) is disordered. The segment covering 278-288 (DQEGNSVSSSP) has biased composition (polar residues). Residues Lys323, Lys329, Lys348, Lys431, Lys458, Lys463, and Lys480 each participate in a glycyl lysine isopeptide (Lys-Gly) (interchain with G-Cter in SUMO2) cross-link. Position 531 is a phosphoserine (Ser531). Residues 553-647 (ILDNSSTERI…NIPVGPGSTF (95 aa)) are disordered. Lys567 is covalently cross-linked (Glycyl lysine isopeptide (Lys-Gly) (interchain with G-Cter in SUMO2)). Residues 595 to 607 (KTVTASHSASPNT) show a composition bias toward polar residues. Phosphoserine is present on Ser604. Glycyl lysine isopeptide (Lys-Gly) (interchain with G-Cter in SUMO2) cross-links involve residues Lys610, Lys651, Lys782, Lys788, Lys814, and Lys823. Residues 610–621 (KRGRPRKLRLSK) show a composition bias toward basic residues. Ser848 is subject to Phosphoserine. Residues 871-913 (KQSTISPSTSHSVKPQSVTTASRKTKAQNKQTTLSGRTKSSYK) are compositionally biased toward polar residues. 2 disordered regions span residues 871 to 946 (KQST…TSDN) and 967 to 987 (LRQAQQQHLQQQGTRPPGLSK). Ser921 carries the phosphoserine modification. A Glycyl lysine isopeptide (Lys-Gly) (interchain with G-Cter in SUMO2) cross-link involves residue Lys925. Polar residues predominate over residues 937-946 (KNSLSSTSDN). The segment covering 969-978 (QAQQQHLQQQ) has biased composition (low complexity). Residues Lys987 and Lys1088 each participate in a glycyl lysine isopeptide (Lys-Gly) (interchain with G-Cter in SUMO2) cross-link. Residues 1111–1130 (LGEEGREGGGVREDEEQLKE) form a disordered region. The span at 1113–1122 (EEGREGGGVR) shows a compositional bias: basic and acidic residues. Glycyl lysine isopeptide (Lys-Gly) (interchain with G-Cter in SUMO2) cross-links involve residues Lys1136, Lys1158, Lys1194, and Lys1202. Disordered regions lie at residues 1186 to 1215 (QPDLSSTTKGKLTPGIKPARTYTPKPNPVI), 1246 to 1277 (QRQLSPPLSPSSSFQQQSSCYSSPENRVTKEL), 1297 to 1323 (SQEKSWKSSCNEGESSSTSYVHQRSPG), and 1376 to 1424 (RGEK…DISP). Low complexity-rich tracts occupy residues 1248-1269 (QLSPPLSPSSSFQQQSSCYSSP) and 1303-1315 (KSSCNEGESSSTS). A phosphoserine mark is found at Ser1423 and Ser1450. Residues Lys1454 and Lys1495 each participate in a glycyl lysine isopeptide (Lys-Gly) (interchain with G-Cter in SUMO2) cross-link. Disordered regions lie at residues 1476 to 1508 (AKVAASRKPRTLLPSTSNSKMASSGPATNRSGK), 1722 to 1746 (PPVSQRPENAPQIPVTTPQISSNNV), 1856 to 1885 (ISPPETQNLASKTGSESKITPSTGGQPVGT), 1920 to 1954 (IKKESQSTDQKDETNSIKREEETKKALPSKDKALD), 1964 to 1983 (SGIIASENTSNNSLDDGGDL), and 1988 to 2038 (TLRE…AGSK). Polar residues-rich tracts occupy residues 1488 to 1507 (LPSTSNSKMASSGPATNRSG), 1735 to 1746 (PVTTPQISSNNV), and 1859 to 1880 (PETQNLASKTGSESKITPSTGG). Residues Lys1937 and Lys1944 each participate in a glycyl lysine isopeptide (Lys-Gly) (interchain with G-Cter in SUMO2) cross-link. The segment covering 1964–1976 (SGIIASENTSNNS) has biased composition (polar residues). Glycyl lysine isopeptide (Lys-Gly) (interchain with G-Cter in SUMO2) cross-links involve residues Lys2060 and Lys2084. The segment at 2087-2110 (LSGNQVKEQQSNSQAEAKKDCEDS) is disordered. A compositionally biased stretch (polar residues) spans 2088–2101 (SGNQVKEQQSNSQA). Residues Lys2104, Lys2152, and Lys2179 each participate in a glycyl lysine isopeptide (Lys-Gly) (interchain with G-Cter in SUMO2) cross-link. Omega-N-methylarginine is present on Arg2206. Residues 2207–2255 (GSRHFQGHLLLPREQMKPKQQTKDGRSSAADFTVLDLEDEDEEDEKTDD) form a disordered region. Basic and acidic residues predominate over residues 2220–2232 (EQMKPKQQTKDGR). Lys2225 is covalently cross-linked (Glycyl lysine isopeptide (Lys-Gly) (interchain with G-Cter in SUMO2)). Residues 2242 to 2255 (DLEDEDEEDEKTDD) are compositionally biased toward acidic residues. Residues Lys2317, Lys2352, Lys2396, and Lys2471 each participate in a glycyl lysine isopeptide (Lys-Gly) (interchain with G-Cter in SUMO2) cross-link. One can recognise a bHLH domain in the interval 2362–2413 (YYRRTHTANERRRRGEMRDLFEKLKITLGLLHSSKVSKSLILNRAFSEIQGL). Position 2480 is a phosphoserine (Ser2480). The segment at 2515-2534 (KRDQATENASPSDTPHSSAN) is disordered. A compositionally biased stretch (polar residues) spans 2520–2534 (TENASPSDTPHSSAN). Glycyl lysine isopeptide (Lys-Gly) (interchain with G-Cter in SUMO2) cross-links involve residues Lys2568 and Lys2618. The span at 2629 to 2651 (SEASSLKDTERISSRGNHRDSRK) shows a compositional bias: basic and acidic residues. The interval 2629–2654 (SEASSLKDTERISSRGNHRDSRKALG) is disordered. A Glycyl lysine isopeptide (Lys-Gly) (interchain with G-Cter in SUMO2) cross-link involves residue Lys2724. Phosphoserine occurs at positions 2849 and 2860. The interval 2877–2917 (LVSHRKSSDGGQSTSGLPAEPESVSSPPILHMKTGPENSNT) is disordered. Lys2979 participates in a covalent cross-link: Glycyl lysine isopeptide (Lys-Gly) (interchain with G-Cter in SUMO2).

Component of some MLL1/MLL complex, at least composed of the core components KMT2A/MLL1, ASH2L, HCFC1/HCF1, WDR5 and RBBP5, as well as the facultative components BACC1, CHD8, E2F6, HSP70, INO80C, KANSL1, LAS1L, MAX, MCRS1, MGA, MYST1/MOF, PELP1, PHF20, PRP31, RING2, RUVB1/TIP49A, RUVB2/TIP49B, SENP3, TAF1, TAF4, TAF6, TAF7, TAF9 and TEX10. Interacts with ZMYND11. Interacts with MAX. Requires heterodimerization with MAX for E-box binding. As to expression, highly expressed in germ cells and granulosa cells.

Its subcellular location is the nucleus. Functions as a dual-specificity transcription factor, regulating the expression of both MAX-network and T-box family target genes. Functions as a repressor or an activator. Binds to 5'-AATTTCACACCTAGGTGTGAAATT-3' core sequence and seems to regulate MYC-MAX target genes. Suppresses transcriptional activation by MYC and inhibits MYC-dependent cell transformation. Function activated by heterodimerization with MAX. This heterodimerization serves the dual function of both generating an E-box-binding heterodimer and simultaneously blocking interaction of a corepressor. The protein is MAX gene-associated protein of Mus musculus (Mouse).